The primary structure comprises 316 residues: L-lactate dehydrogenase 3 (316 aa).

Residues Val-16, Asp-37, Arg-42, and Tyr-68 each contribute to the NAD(+) site. Arg-91 contributes to the substrate binding site. Residues Ser-104, 121–123, and Thr-146 each bind NAD(+); that span reads ASN. Residue 123–126 coordinates substrate; that stretch reads NPVD. 151–154 is a substrate binding site; that stretch reads DSSR. Positions 156 and 171 each coordinate beta-D-fructose 1,6-bisphosphate. His-178 serves as the catalytic Proton acceptor. Thr-233 is a binding site for substrate.

The protein belongs to the LDH/MDH superfamily. LDH family. Homotetramer.

The protein localises to the cytoplasm. The catalysed reaction is (S)-lactate + NAD(+) = pyruvate + NADH + H(+). The protein operates within fermentation; pyruvate fermentation to lactate; (S)-lactate from pyruvate: step 1/1. Its activity is regulated as follows. Allosterically activated by fructose 1,6-bisphosphate (FBP). Catalyzes the conversion of lactate to pyruvate. The sequence is that of L-lactate dehydrogenase 3 from Bacillus anthracis.